Reading from the N-terminus, the 437-residue chain is 3-ketoacyl-CoA thiolase (437 aa).

Catalysis depends on cysteine 99, which acts as the Acyl-thioester intermediate. Residues histidine 392 and cysteine 422 each act as proton acceptor in the active site.

This sequence belongs to the thiolase-like superfamily. Thiolase family. As to quaternary structure, heterotetramer of two alpha chains (FadJ) and two beta chains (FadI).

The protein resides in the cytoplasm. The catalysed reaction is an acyl-CoA + acetyl-CoA = a 3-oxoacyl-CoA + CoA. Its pathway is lipid metabolism; fatty acid beta-oxidation. Catalyzes the final step of fatty acid oxidation in which acetyl-CoA is released and the CoA ester of a fatty acid two carbons shorter is formed. This Pectobacterium atrosepticum (strain SCRI 1043 / ATCC BAA-672) (Erwinia carotovora subsp. atroseptica) protein is 3-ketoacyl-CoA thiolase.